Reading from the N-terminus, the 384-residue chain is Zinc transporter 7 (384 aa).

A signal peptide spans 1-25 (MERFVQFLRRGNGLMAASLAAGSCA). The Extracellular segment spans residues 26–46 (EEVAKAEGAGCRDDAAALRLK). Residues 47–67 (GVAMATILVAGVVGVGLPLAG) traverse the membrane as a helical segment. The Cytoplasmic segment spans residues 68–79 (RKRRALRTDSAA). A helical membrane pass occupies residues 80 to 100 (FVAAKAFAAGVILATGFVHML). The Extracellular segment spans residues 101 to 119 (HDAEHALSSPCLPAHPWRS). A helical membrane pass occupies residues 120 to 140 (FPFPGFVAMSAALATLVLDFL). Residues 141–227 (ATRFYEGKHR…GEGEVPAQVR (87 aa)) lie on the Cytoplasmic side of the membrane. The disordered stretch occupies residues 185 to 222 (DNKAPLLQPHSHSHSHPHGHGHGHELAQPEGSGGEGEV). Basic residues predominate over residues 195–205 (SHSHSHPHGHG). The helical transmembrane segment at 228–248 (SVVVSQILEMGIVSHSVIIGL) threads the bilayer. The Extracellular portion of the chain corresponds to 249-261 (SLGVSRSPCTIRP). Residues 262–282 (LVAALSFHQFFEGFALGGCIA) traverse the membrane as a helical segment. The Cytoplasmic segment spans residues 283–291 (QAQFKTLSA). A helical transmembrane segment spans residues 292–312 (AIMACFFAITTPAGIAAGAGV). Residues 313 to 323 (ASFYNANSPRA) are Extracellular-facing. A helical membrane pass occupies residues 324–344 (LVVEGILDSVSAGILIYMSLV). At 345-363 (DLIAADFLGGKMTGSTRQQ) the chain is on the cytoplasmic side. The chain crosses the membrane as a helical span at residues 364 to 384 (VMAYIALFLGALSMSSLAIWA).

The protein belongs to the ZIP transporter (TC 2.A.5) family.

It is found in the cell membrane. Zinc transporter that may be involved in zinc uptake from the rhizosphere. This is Zinc transporter 7 (ZIP7) from Oryza sativa subsp. japonica (Rice).